A 179-amino-acid chain; its full sequence is Large ribosomal subunit protein uL6 (179 aa).

This sequence belongs to the universal ribosomal protein uL6 family. Part of the 50S ribosomal subunit.

Its function is as follows. This protein binds to the 23S rRNA, and is important in its secondary structure. It is located near the subunit interface in the base of the L7/L12 stalk, and near the tRNA binding site of the peptidyltransferase center. The chain is Large ribosomal subunit protein uL6 from Mycolicibacterium vanbaalenii (strain DSM 7251 / JCM 13017 / BCRC 16820 / KCTC 9966 / NRRL B-24157 / PYR-1) (Mycobacterium vanbaalenii).